A 460-amino-acid chain; its full sequence is Argininosuccinate lyase (460 aa).

It belongs to the lyase 1 family. Argininosuccinate lyase subfamily.

The protein resides in the cytoplasm. It catalyses the reaction 2-(N(omega)-L-arginino)succinate = fumarate + L-arginine. The protein operates within amino-acid biosynthesis; L-arginine biosynthesis; L-arginine from L-ornithine and carbamoyl phosphate: step 3/3. This is Argininosuccinate lyase from Nitratidesulfovibrio vulgaris (strain ATCC 29579 / DSM 644 / CCUG 34227 / NCIMB 8303 / VKM B-1760 / Hildenborough) (Desulfovibrio vulgaris).